We begin with the raw amino-acid sequence, 341 residues long: D-aspartate oxidase (341 aa).

D36, R37, T43, S44, M50, G307, I311, and S312 together coordinate FAD. The short motif at S339–L341 is the Microbody targeting signal element.

It belongs to the DAMOX/DASOX family. In terms of assembly, tetramer. Interacts with PEX5; the interaction is direct and required for localization of DDO to the peroxisome. FAD serves as cofactor. Expressed in liver and kidney (at protein level). In the brain, expressed in the frontal, temporal, and occipital lobes of the cortex, hippocampus, striatum, diencephalon, brainstem, cerebellum, spinal cord, plexus choroiderus and ependyma (at protein level). Also expressed in the lung, muscle, heart, spleen, small intestine and testis (at protein level).

It localises to the peroxisome matrix. The protein resides in the cytoplasm. The protein localises to the cytosol. The catalysed reaction is D-aspartate + O2 + H2O = oxaloacetate + H2O2 + NH4(+). It catalyses the reaction D-glutamate + O2 + H2O = H2O2 + 2-oxoglutarate + NH4(+). Inhibited by aminooxyacetic acid, malonate, meso-tartrate and potassium bromide. In terms of biological role, selectively catalyzes the oxidative deamination of acidic amino acids. Suppresses the level of D-aspartate in the brain, an amino acid that can act as an agonist for glutamate receptors. Protects the organism from the toxicity of D-amino acids. May also function in the intestine. The polypeptide is D-aspartate oxidase (Rattus norvegicus (Rat)).